Reading from the N-terminus, the 157-residue chain is SsrA-binding protein (157 aa).

Belongs to the SmpB family.

The protein localises to the cytoplasm. Required for rescue of stalled ribosomes mediated by trans-translation. Binds to transfer-messenger RNA (tmRNA), required for stable association of tmRNA with ribosomes. tmRNA and SmpB together mimic tRNA shape, replacing the anticodon stem-loop with SmpB. tmRNA is encoded by the ssrA gene; the 2 termini fold to resemble tRNA(Ala) and it encodes a 'tag peptide', a short internal open reading frame. During trans-translation Ala-aminoacylated tmRNA acts like a tRNA, entering the A-site of stalled ribosomes, displacing the stalled mRNA. The ribosome then switches to translate the ORF on the tmRNA; the nascent peptide is terminated with the 'tag peptide' encoded by the tmRNA and targeted for degradation. The ribosome is freed to recommence translation, which seems to be the essential function of trans-translation. This chain is SsrA-binding protein, found in Limosilactobacillus reuteri (strain DSM 20016) (Lactobacillus reuteri).